Here is a 56-residue protein sequence, read N- to C-terminus: PI-stichotoxin-Hmg3c (56 aa).

The BPTI/Kunitz inhibitor domain maps to 4-54 (CLEPKVVGPCTAYFPRFYFDSETGKCTPFIYGGCEGNGNNFETLHACRAIC). 3 cysteine pairs are disulfide-bonded: C4-C54, C13-C37, and C29-C50.

The protein belongs to the venom Kunitz-type family. Sea anemone type 2 potassium channel toxin subfamily. Post-translationally, contains three disulfide bonds.

The protein localises to the secreted. The protein resides in the nematocyst. Serine protease inhibitor that inhibits trypsin (Ki=73.8 nM) and chymotrypsin (Ki=993 nM). In Heteractis magnifica (Magnificent sea anemone), this protein is PI-stichotoxin-Hmg3c.